The following is a 174-amino-acid chain: Protein FanG (174 aa).

Residues 1 to 21 form the signal peptide; sequence MKKLYKAITVICILMSNLQSA. An intrachain disulfide couples C41 to C75.

The protein resides in the fimbrium. Functionally, involved in the biosynthesis of K99 fimbriae. The polypeptide is Protein FanG (fanG) (Escherichia coli).